The chain runs to 821 residues: MNEWSEMLVCRDYCALMMRDRKECDARCCRDGEGERVRARERLDATVAGLTELEYLRQRQELLVRSVLSCPEAAGQDKPCLTVDDSYLNTEEKLLEENILLLRKQLNCLRRRDAGLINQLQELDRQISDLRLDTETSHEHVETDSRPSSGFYDLSDGASGSLSNSSNSVFSECLSSCRSTTCLCTPLDTSLCASEGRLKPADDPGSCAECDCHCEDSSSGTVRRSLSASYSPSPDSSCDGISKFHCDLIAKNGNDVYRYPSPLHAVAVQSPIFIQSMTSHLKDDCNFSKPGEALNDEQKPEQVVGSQTSSWHASQMLPNKKLDSYIYGLLQRRAQPLRTNKPRTSINTDPSKSILRQASLCSRAPASVQAQQWTSDLKPNWQTCLQDASATSTEPSTASPQRQWSAESKGGTPQNGAYLSSSQPQNSYSTTNENTNCLLKKKVSGTSKGQLLSATPKDCPDLGSPKAVSSPKLNKHCFYNVEDNKTGQAMKASPLKRSPKTQTSLSCGKDSEQLAQELVSLGSSSQSQDEGGPLVSAQYIPAQKQNVNLQKGGTKNIKIVKVKNSASSKSRPQVFEHVSETVRDKHRTGSRRTRQVDEVHHLHKSSKKASAKTKRIPASIPEGRILERHTSSSGARSSAQRHHGHHRHHEAVLAKPKYKRNDFHRRPRGLHEIPYEEAYRRAHRRQKREMLSHMYLPSNAHYTSPYAYVGSDSEYSAECASLFHSTILDTSEDERSNYTTNCFGDSESSASEADYVAESSTSSDSEGSAGVNWRQISQAGSGSHGMTSAQAKAFVKIKASHNLKKKILRFRSGSLKLMTTV.

Residues 88-136 (LNTEEKLLEENILLLRKQLNCLRRRDAGLINQLQELDRQISDLRLDTET) are a coiled coil. 4 disordered regions span residues 288 to 312 (SKPG…SSWH), 386 to 432 (QDAS…STTN), 564 to 615 (NSAS…KTKR), and 627 to 655 (ERHT…VLAK). Positions 388-400 (ASATSTEPSTASP) are enriched in low complexity. Residues 401–432 (QRQWSAESKGGTPQNGAYLSSSQPQNSYSTTN) are compositionally biased toward polar residues. 3 stretches are compositionally biased toward basic residues: residues 584 to 593 (DKHRTGSRRT), 601 to 615 (HLHK…KTKR), and 639 to 649 (AQRHHGHHRHH). The short motif at 818-821 (MTTV) is the PDZ-binding element.

The protein belongs to the dapper family. Interacts with dvl2.

It is found in the cytoplasm. Functionally, involved in regulation of intracellular signaling pathways during development. Specifically thought to play a role in canonical and/or non-canonical Wnt signaling pathways through interaction with DSH (Dishevelled) family proteins. Binds to dvl2 and may regulate the degradation of ctnnb1/beta-catenin, thereby modulating the transcriptional activation of target genes of the Wnt signaling pathway. Seems to activate the canonical Wnt signaling pathway. The sequence is that of Dapper homolog 1 (dact1) from Danio rerio (Zebrafish).